Here is a 288-residue protein sequence, read N- to C-terminus: Alpha/beta hydrolase domain-containing protein 17B (288 aa).

Residues Ser170, Asp235, and His264 each act as charge relay system in the active site.

This sequence belongs to the AB hydrolase superfamily. ABHD17 family. Palmitoylated on cysteine residues located in a cysteine cluster at the N-terminus which promotes membrane localization.

The protein resides in the cell membrane. It is found in the recycling endosome membrane. It localises to the cell projection. The protein localises to the dendritic spine. Its subcellular location is the postsynaptic density membrane. The catalysed reaction is S-hexadecanoyl-L-cysteinyl-[protein] + H2O = L-cysteinyl-[protein] + hexadecanoate + H(+). Hydrolyzes fatty acids from S-acylated cysteine residues in proteins. Has depalmitoylating activity towards nras. The protein is Alpha/beta hydrolase domain-containing protein 17B of Xenopus laevis (African clawed frog).